A 286-amino-acid chain; its full sequence is Shikimate dehydrogenase (NADP(+)) (286 aa).

Residues 21-23 (TLS) and Thr68 contribute to the shikimate site. Catalysis depends on Lys72, which acts as the Proton acceptor. Residue Asp84 coordinates NADP(+). Positions 93 and 108 each coordinate shikimate. NADP(+)-binding positions include 132 to 136 (GYGGA) and Leu226. Tyr228 is a binding site for shikimate. Gly249 provides a ligand contact to NADP(+).

The protein belongs to the shikimate dehydrogenase family. As to quaternary structure, homodimer.

The enzyme catalyses shikimate + NADP(+) = 3-dehydroshikimate + NADPH + H(+). It participates in metabolic intermediate biosynthesis; chorismate biosynthesis; chorismate from D-erythrose 4-phosphate and phosphoenolpyruvate: step 4/7. In terms of biological role, involved in the biosynthesis of the chorismate, which leads to the biosynthesis of aromatic amino acids. Catalyzes the reversible NADPH linked reduction of 3-dehydroshikimate (DHSA) to yield shikimate (SA). The protein is Shikimate dehydrogenase (NADP(+)) of Thermosynechococcus vestitus (strain NIES-2133 / IAM M-273 / BP-1).